We begin with the raw amino-acid sequence, 339 residues long: Methionine import ATP-binding protein MetN 2 (339 aa).

In terms of domain architecture, ABC transporter spans 2–241 (ISFNNVSKLY…PKTKTTQNFV (240 aa)). Residue 38–45 (GFSGAGKS) participates in ATP binding.

This sequence belongs to the ABC transporter superfamily. Methionine importer (TC 3.A.1.24) family. In terms of assembly, the complex is composed of two ATP-binding proteins (MetN), two transmembrane proteins (MetI) and a solute-binding protein (MetQ).

It localises to the cell membrane. The catalysed reaction is L-methionine(out) + ATP + H2O = L-methionine(in) + ADP + phosphate + H(+). It carries out the reaction D-methionine(out) + ATP + H2O = D-methionine(in) + ADP + phosphate + H(+). In terms of biological role, part of the ABC transporter complex MetNIQ involved in methionine import. Responsible for energy coupling to the transport system. This chain is Methionine import ATP-binding protein MetN 2, found in Bacillus cereus (strain ATCC 14579 / DSM 31 / CCUG 7414 / JCM 2152 / NBRC 15305 / NCIMB 9373 / NCTC 2599 / NRRL B-3711).